The sequence spans 450 residues: 3-phosphoshikimate 1-carboxyvinyltransferase (450 aa).

Positions 1–26 are disordered; sequence MSGHGTPIPMTSRRASPLKGEAHVPG. Positions 28, 29, and 33 each coordinate 3-phosphoshikimate. Lys28 is a binding site for phosphoenolpyruvate. Residues Gly101 and Arg129 each coordinate phosphoenolpyruvate. 4 residues coordinate 3-phosphoshikimate: Ser174, Gln176, Asp327, and Lys354. Residue Gln176 coordinates phosphoenolpyruvate. Residue Asp327 is the Proton acceptor of the active site. Phosphoenolpyruvate contacts are provided by Arg358 and Arg403.

This sequence belongs to the EPSP synthase family. Monomer.

It localises to the cytoplasm. It catalyses the reaction 3-phosphoshikimate + phosphoenolpyruvate = 5-O-(1-carboxyvinyl)-3-phosphoshikimate + phosphate. It functions in the pathway metabolic intermediate biosynthesis; chorismate biosynthesis; chorismate from D-erythrose 4-phosphate and phosphoenolpyruvate: step 6/7. Its function is as follows. Catalyzes the transfer of the enolpyruvyl moiety of phosphoenolpyruvate (PEP) to the 5-hydroxyl of shikimate-3-phosphate (S3P) to produce enolpyruvyl shikimate-3-phosphate and inorganic phosphate. The chain is 3-phosphoshikimate 1-carboxyvinyltransferase from Ruegeria sp. (strain TM1040) (Silicibacter sp.).